We begin with the raw amino-acid sequence, 250 residues long: MLLAIDVGNTNTVVGVFDGDDLADSWRVRTDPHATADELVLLYRGLLGEHRITGVSICSTVPAALRELRRMVVRAFRDLPVVIVEPGTRTGVPILIDNPKEAGADRIMNTLAAHHLYGGPAIVVDFGTSTNLDVVSARGEFIGGVLAPGIEIALDALASRAAQLRKVELTPPRSVIGKSTVEALQSGMIYGVAGQVDGLVRRIRAELGAHATAIATGGLASLVVKESETLDRHEPHLTLIGLRLVFEKNI.

Asp-6–Val-13 serves as a coordination point for ATP. Residue Gly-103 to Arg-106 participates in substrate binding. Asp-105 functions as the Proton acceptor in the catalytic mechanism. Residue Asp-125 participates in K(+) binding. Thr-128 provides a ligand contact to ATP. Thr-180 serves as a coordination point for substrate.

It belongs to the type III pantothenate kinase family. As to quaternary structure, homodimer. Requires NH4(+) as cofactor. K(+) is required as a cofactor.

It is found in the cytoplasm. The catalysed reaction is (R)-pantothenate + ATP = (R)-4'-phosphopantothenate + ADP + H(+). The protein operates within cofactor biosynthesis; coenzyme A biosynthesis; CoA from (R)-pantothenate: step 1/5. Catalyzes the phosphorylation of pantothenate (Pan), the first step in CoA biosynthesis. In Frankia alni (strain DSM 45986 / CECT 9034 / ACN14a), this protein is Type III pantothenate kinase.